Consider the following 1012-residue polypeptide: Formate dehydrogenase subunit alpha (1012 aa).

Positions 1–35 (MLIKRRAFLKLTAAGATLSAFGGLGVDLAPAKAQA) form a signal peptide, tat-type signal. Positions 45–103 (AKQTTSVCCYCSVGCGLIVHTDKKTNRAINVEGDPDHPINEGSLCAKGASTWQLAENER) constitute a 4Fe-4S Mo/W bis-MGD-type domain. Residues C52, C55, C59, and C89 each coordinate [4Fe-4S] cluster. A W-bis(molybdopterin guanine dinucleotide)-binding site is contributed by U193. Residue U193 is a non-standard amino acid, selenocysteine. T393, K395, K398, L428, and N430 together coordinate Ca(2+). C852 and C879 form a disulfide bridge.

Belongs to the prokaryotic molybdopterin-containing oxidoreductase family. In terms of assembly, heterodimer of alpha (FdhA) and beta (FdhB) subunits. Requires [4Fe-4S] cluster as cofactor. The cofactor is W-bis(molybdopterin guanine dinucleotide). The disulfide bond is likely to be broken in the active form of this enzyme. Post-translationally, predicted to be exported by the Tat system. The position of the signal peptide cleavage has been experimentally proven.

The protein localises to the periplasm. It catalyses the reaction formate + NAD(+) = CO2 + NADH. Functionally, alpha chain of the formate dehydrogenase (FDH) catalyze the reversible two-electron oxidation of formate to carbon dioxide. FDH loses activity in the presence of air, but this activity can be restored. The alpha subunit of formate dehydrogenase forms the active site. This Megalodesulfovibrio gigas (Desulfovibrio gigas) protein is Formate dehydrogenase subunit alpha.